Here is a 377-residue protein sequence, read N- to C-terminus: N5-carboxyaminoimidazole ribonucleotide synthase (377 aa).

ATP contacts are provided by residues R93, K133, 138–144, 175–178, E183, H206, and 257–258; these read GYDGKGQ, EEFV, and NE. An ATP-grasp domain is found at 97 to 287; it reads KALLDRAQVA…QFENHLRAVC (191 aa).

Belongs to the PurK/PurT family. In terms of assembly, homodimer.

It catalyses the reaction 5-amino-1-(5-phospho-beta-D-ribosyl)imidazole + hydrogencarbonate + ATP = 5-carboxyamino-1-(5-phospho-D-ribosyl)imidazole + ADP + phosphate + 2 H(+). The protein operates within purine metabolism; IMP biosynthesis via de novo pathway; 5-amino-1-(5-phospho-D-ribosyl)imidazole-4-carboxylate from 5-amino-1-(5-phospho-D-ribosyl)imidazole (N5-CAIR route): step 1/2. Functionally, catalyzes the ATP-dependent conversion of 5-aminoimidazole ribonucleotide (AIR) and HCO(3)(-) to N5-carboxyaminoimidazole ribonucleotide (N5-CAIR). This chain is N5-carboxyaminoimidazole ribonucleotide synthase, found in Vibrio cholerae serotype O1 (strain ATCC 39315 / El Tor Inaba N16961).